A 503-amino-acid chain; its full sequence is Inosine-5'-monophosphate dehydrogenase (503 aa).

K(+) contacts are provided by G20 and S22. 2 CBS domains span residues 103 to 163 and 167 to 228; these read FVVS…ETKV and MTPF…LVDS. An NAD(+)-binding site is contributed by 261–263; it reads DSS. K(+) contacts are provided by D264, F266, G314, and G316. NAD(+) is bound at residue 312–314; sequence GIG. Residue S317 coordinates IMP. Position 319 (C319) interacts with K(+). Residue C319 is the Thioimidate intermediate of the active site. Residues 358 to 360, 381 to 382, and 405 to 409 each bind IMP; these read DGG, GR, and YWGEG. R418 functions as the Proton acceptor in the catalytic mechanism. Position 431 (E431) interacts with IMP. Positions 460, 485, 486, and 487 each coordinate K(+).

Belongs to the IMPDH/GMPR family. In terms of assembly, homotetramer. It depends on K(+) as a cofactor.

The protein resides in the cytoplasm. The catalysed reaction is IMP + NAD(+) + H2O = XMP + NADH + H(+). The protein operates within purine metabolism; XMP biosynthesis via de novo pathway; XMP from IMP: step 1/1. Mycophenolic acid (MPA) is a non-competitive inhibitor that prevents formation of the closed enzyme conformation by binding to the same site as the amobile flap. In contrast, mizoribine monophosphate (MZP) is a competitive inhibitor that induces the closed conformation. MPA is a potent inhibitor of mammalian IMPDHs but a poor inhibitor of the bacterial enzymes. MZP is a more potent inhibitor of bacterial IMPDH. Its function is as follows. Catalyzes the conversion of inosine 5'-phosphate (IMP) to xanthosine 5'-phosphate (XMP), the first committed and rate-limiting step in the de novo synthesis of guanine nucleotides, and therefore plays an important role in the regulation of cell growth. Could also have a single-stranded nucleic acid-binding activity and could play a role in RNA and/or DNA metabolism. The sequence is that of Inosine-5'-monophosphate dehydrogenase from Tritrichomonas foetus (Trichomonas foetus).